The primary structure comprises 1444 residues: DNA polymerase III PolC-type (1444 aa).

An Exonuclease domain is found at 421–577 (YVVFDVETTG…ADAEATGYLL (157 aa)).

Belongs to the DNA polymerase type-C family. PolC subfamily.

It localises to the cytoplasm. It carries out the reaction DNA(n) + a 2'-deoxyribonucleoside 5'-triphosphate = DNA(n+1) + diphosphate. Functionally, required for replicative DNA synthesis. This DNA polymerase also exhibits 3' to 5' exonuclease activity. The chain is DNA polymerase III PolC-type from Lacticaseibacillus paracasei (strain ATCC 334 / BCRC 17002 / CCUG 31169 / CIP 107868 / KCTC 3260 / NRRL B-441) (Lactobacillus paracasei).